We begin with the raw amino-acid sequence, 231 residues long: Probable septum site-determining protein MinC (231 aa).

The interval 102 to 125 (KEKAPRPAPAPQAPAQNTTPVTKT) is disordered.

Belongs to the MinC family. Interacts with MinD and FtsZ.

Cell division inhibitor that blocks the formation of polar Z ring septums. Rapidly oscillates between the poles of the cell to destabilize FtsZ filaments that have formed before they mature into polar Z rings. Prevents FtsZ polymerization. This Escherichia coli O139:H28 (strain E24377A / ETEC) protein is Probable septum site-determining protein MinC.